Consider the following 122-residue polypeptide: Large ribosomal subunit protein uL14 (122 aa).

The protein belongs to the universal ribosomal protein uL14 family. In terms of assembly, part of the 50S ribosomal subunit. Forms a cluster with proteins L3 and L19. In the 70S ribosome, L14 and L19 interact and together make contacts with the 16S rRNA in bridges B5 and B8.

In terms of biological role, binds to 23S rRNA. Forms part of two intersubunit bridges in the 70S ribosome. The chain is Large ribosomal subunit protein uL14 from Mycobacterium ulcerans (strain Agy99).